Reading from the N-terminus, the 1532-residue chain is Glycogen debranching enzyme (1532 aa).

Ser64 is subject to Phosphoserine. Residues Asp526, His529, and Asp627 contribute to the active site.

Belongs to the glycogen debranching enzyme family. In terms of assembly, monomer. Interacts with NHLRC1/malin. Post-translationally, the N-terminus is blocked. In terms of processing, ubiquitinated. As to expression, liver, kidney and lymphoblastoid cells express predominantly isoform 1; whereas muscle and heart express not only isoform 1, but also muscle-specific isoform mRNAs (isoforms 2, 3 and 4). Isoforms 5 and 6 are present in both liver and muscle.

The protein localises to the cytoplasm. It carries out the reaction Transfers a segment of a (1-&gt;4)-alpha-D-glucan to a new position in an acceptor, which may be glucose or a (1-&gt;4)-alpha-D-glucan.. The catalysed reaction is Hydrolysis of (1-&gt;6)-alpha-D-glucosidic branch linkages in glycogen phosphorylase limit dextrin.. In terms of biological role, multifunctional enzyme acting as 1,4-alpha-D-glucan:1,4-alpha-D-glucan 4-alpha-D-glycosyltransferase and amylo-1,6-glucosidase in glycogen degradation. The chain is Glycogen debranching enzyme (AGL) from Homo sapiens (Human).